Here is a 396-residue protein sequence, read N- to C-terminus: Elongation factor Tu 1 (396 aa).

Positions lysine 10 to glutamate 206 constitute a tr-type G domain. Residues glycine 19–threonine 26 are G1. Residue glycine 19–threonine 26 participates in GTP binding. Threonine 26 is a Mg(2+) binding site. The G2 stretch occupies residues glycine 60–serine 64. Residues aspartate 81 to glycine 84 are G3. Residues aspartate 81–histidine 85 and asparagine 136–aspartate 139 each bind GTP. The interval asparagine 136 to aspartate 139 is G4. A G5 region spans residues serine 174–leucine 176.

It belongs to the TRAFAC class translation factor GTPase superfamily. Classic translation factor GTPase family. EF-Tu/EF-1A subfamily. In terms of assembly, monomer.

Its subcellular location is the cytoplasm. It carries out the reaction GTP + H2O = GDP + phosphate + H(+). Its function is as follows. GTP hydrolase that promotes the GTP-dependent binding of aminoacyl-tRNA to the A-site of ribosomes during protein biosynthesis. The sequence is that of Elongation factor Tu 1 from Rhodopseudomonas palustris (strain BisB5).